The following is a 479-amino-acid chain: Deoxyribodipyrimidine photo-lyase (479 aa).

The 132-residue stretch at 6–137 folds into the Photolyase/cryptochrome alpha/beta domain; it reads SLKAVWFRRD…PFYTFEDAYL (132 aa). Tyr-229 serves as a coordination point for FAD. Arg-233 provides a ligand contact to DNA. FAD is bound by residues 241 to 245 and 278 to 285; these read TSRLS and ELAWRDFY. 2 interaction with DNA regions span residues 278 to 285 and 344 to 345; these read ELAWRDFY and NR. 375–377 is a binding site for FAD; sequence DYD. Gln-407 is a DNA binding site.

The protein belongs to the DNA photolyase class-1 family. As to quaternary structure, monomer. The cofactor is FAD. It depends on (6R)-5,10-methylene-5,6,7,8-tetrahydrofolate as a cofactor.

The catalysed reaction is cyclobutadipyrimidine (in DNA) = 2 pyrimidine residues (in DNA).. Functionally, involved in repair of UV radiation-induced DNA damage. Catalyzes the light-dependent monomerization (300-600 nm) of cyclobutyl pyrimidine dimers (in cis-syn configuration), which are formed between adjacent bases on the same DNA strand upon exposure to ultraviolet radiation. This is Deoxyribodipyrimidine photo-lyase (phr) from Alkalihalophilus pseudofirmus (strain ATCC BAA-2126 / JCM 17055 / OF4) (Bacillus pseudofirmus).